The chain runs to 155 residues: Small ribosomal subunit protein uS7cz/uS7cy (155 aa).

It belongs to the universal ribosomal protein uS7 family. As to quaternary structure, part of the 30S ribosomal subunit.

The protein localises to the plastid. Its subcellular location is the chloroplast. Functionally, one of the primary rRNA binding proteins, it binds directly to 16S rRNA where it nucleates assembly of the head domain of the 30S subunit. This Ipomoea purpurea (Common morning glory) protein is Small ribosomal subunit protein uS7cz/uS7cy (rps7-A).